The primary structure comprises 278 residues: Pantothenate synthetase (278 aa).

Position 26–33 (26–33) interacts with ATP; sequence MGNLHEGH. Catalysis depends on His-33, which acts as the Proton donor. Gln-57 lines the (R)-pantoate pocket. Gln-57 contributes to the beta-alanine binding site. 144–147 provides a ligand contact to ATP; that stretch reads GKKD. Residue Gln-150 participates in (R)-pantoate binding. Residues Gly-173 and 181 to 184 each bind ATP; that span reads LSSR.

It belongs to the pantothenate synthetase family. In terms of assembly, homodimer.

The protein resides in the cytoplasm. The enzyme catalyses (R)-pantoate + beta-alanine + ATP = (R)-pantothenate + AMP + diphosphate + H(+). Its pathway is cofactor biosynthesis; (R)-pantothenate biosynthesis; (R)-pantothenate from (R)-pantoate and beta-alanine: step 1/1. Its function is as follows. Catalyzes the condensation of pantoate with beta-alanine in an ATP-dependent reaction via a pantoyl-adenylate intermediate. This is Pantothenate synthetase from Neisseria meningitidis serogroup A / serotype 4A (strain DSM 15465 / Z2491).